Reading from the N-terminus, the 564-residue chain is Glutamate--tRNA ligase (564 aa).

Positions 107–117 (PNPNGPPTLGS) match the 'HIGH' region motif.

It belongs to the class-I aminoacyl-tRNA synthetase family. Glutamate--tRNA ligase type 2 subfamily.

It localises to the cytoplasm. The enzyme catalyses tRNA(Glu) + L-glutamate + ATP = L-glutamyl-tRNA(Glu) + AMP + diphosphate. Its function is as follows. Catalyzes the attachment of glutamate to tRNA(Glu) in a two-step reaction: glutamate is first activated by ATP to form Glu-AMP and then transferred to the acceptor end of tRNA(Glu). In Methanothrix thermoacetophila (strain DSM 6194 / JCM 14653 / NBRC 101360 / PT) (Methanosaeta thermophila), this protein is Glutamate--tRNA ligase.